We begin with the raw amino-acid sequence, 403 residues long: Phosphopentomutase (403 aa).

Mn(2+)-binding residues include D13, D298, H303, D339, H340, and H351.

Belongs to the phosphopentomutase family. Requires Mn(2+) as cofactor.

Its subcellular location is the cytoplasm. The enzyme catalyses 2-deoxy-alpha-D-ribose 1-phosphate = 2-deoxy-D-ribose 5-phosphate. It carries out the reaction alpha-D-ribose 1-phosphate = D-ribose 5-phosphate. Its pathway is carbohydrate degradation; 2-deoxy-D-ribose 1-phosphate degradation; D-glyceraldehyde 3-phosphate and acetaldehyde from 2-deoxy-alpha-D-ribose 1-phosphate: step 1/2. In terms of biological role, isomerase that catalyzes the conversion of deoxy-ribose 1-phosphate (dRib-1-P) and ribose 1-phosphate (Rib-1-P) to deoxy-ribose 5-phosphate (dRib-5-P) and ribose 5-phosphate (Rib-5-P), respectively. The polypeptide is Phosphopentomutase (Streptococcus uberis (strain ATCC BAA-854 / 0140J)).